Consider the following 348-residue polypeptide: Galactose-1-phosphate uridylyltransferase (348 aa).

28–31 (RAKR) is a UDP-alpha-D-glucose binding site. Positions 52 and 55 each coordinate Zn(2+). UDP-alpha-D-glucose-binding positions include Val-61 and 77-78 (ND). His-115 is a Zn(2+) binding site. UDP-alpha-D-glucose contacts are provided by residues Asn-153 and 159 to 161 (GCS). His-164 serves as a coordination point for Zn(2+). His-166 functions as the Tele-UMP-histidine intermediate in the catalytic mechanism. Gln-168 contacts UDP-alpha-D-glucose. Residues Glu-182, His-281, His-296, and His-298 each coordinate Fe cation. UDP-alpha-D-glucose is bound by residues 311–312 (KF), 316–317 (YE), and Gln-323.

This sequence belongs to the galactose-1-phosphate uridylyltransferase type 1 family. In terms of assembly, homodimer. Requires Zn(2+) as cofactor.

It carries out the reaction alpha-D-galactose 1-phosphate + UDP-alpha-D-glucose = alpha-D-glucose 1-phosphate + UDP-alpha-D-galactose. The protein operates within carbohydrate metabolism; galactose metabolism. The sequence is that of Galactose-1-phosphate uridylyltransferase (galT) from Escherichia coli (strain K12).